The chain runs to 257 residues: Imidazole glycerol phosphate synthase subunit HisF (257 aa).

Catalysis depends on residues Asp-12 and Asp-131.

It belongs to the HisA/HisF family. Heterodimer of HisH and HisF.

It is found in the cytoplasm. The enzyme catalyses 5-[(5-phospho-1-deoxy-D-ribulos-1-ylimino)methylamino]-1-(5-phospho-beta-D-ribosyl)imidazole-4-carboxamide + L-glutamine = D-erythro-1-(imidazol-4-yl)glycerol 3-phosphate + 5-amino-1-(5-phospho-beta-D-ribosyl)imidazole-4-carboxamide + L-glutamate + H(+). It participates in amino-acid biosynthesis; L-histidine biosynthesis; L-histidine from 5-phospho-alpha-D-ribose 1-diphosphate: step 5/9. Its function is as follows. IGPS catalyzes the conversion of PRFAR and glutamine to IGP, AICAR and glutamate. The HisF subunit catalyzes the cyclization activity that produces IGP and AICAR from PRFAR using the ammonia provided by the HisH subunit. This is Imidazole glycerol phosphate synthase subunit HisF from Paraburkholderia phymatum (strain DSM 17167 / CIP 108236 / LMG 21445 / STM815) (Burkholderia phymatum).